We begin with the raw amino-acid sequence, 70 residues long: Conotoxin Pl171 (70 aa).

The first 21 residues, 1–21 (MGMRMMFTMILLVVLVTTVVS), serve as a signal peptide directing secretion. 2 cysteine pairs are disulfide-bonded: Cys54–Cys61 and Cys55–Cys67. Phe69 is subject to Phenylalanine amide.

It belongs to the conotoxin A superfamily. As to expression, expressed by the venom duct.

It localises to the secreted. In terms of biological role, probable neurotoxin with unknown target. Possibly targets ion channels. The protein is Conotoxin Pl171 of Conus planorbis (Planorbis cone).